We begin with the raw amino-acid sequence, 490 residues long: Cytochrome P450 2C28 (490 aa).

A Phosphoserine modification is found at Ser-127. Lys-249 and Lys-375 each carry N6-acetyllysine. Cys-435 is a heme binding site.

Belongs to the cytochrome P450 family. The cofactor is heme. Liver.

The protein resides in the endoplasmic reticulum membrane. It is found in the microsome membrane. It carries out the reaction an organic molecule + reduced [NADPH--hemoprotein reductase] + O2 = an alcohol + oxidized [NADPH--hemoprotein reductase] + H2O + H(+). Functionally, catalyzes the N-demethylation of aminopyrine and benzphetamine, but does not catalyze the hydroxylation of tolbutamide, testosterone, and progesterone. This Mesocricetus auratus (Golden hamster) protein is Cytochrome P450 2C28 (CYP2C28).